We begin with the raw amino-acid sequence, 318 residues long: NADH-ubiquinone oxidoreductase chain 1 (318 aa).

9 helical membrane passes run 2 to 22, 37 to 57, 69 to 89, 100 to 120, 136 to 156, 171 to 191, 231 to 251, 253 to 273, and 293 to 313; these read FLMN…FLTL, PNIV…KLFI, LMFT…WIPM, LGVL…LWSG, VAQT…VMMM, HMWL…STLA, IIMM…NPLF, ELFT…FLWV, and FLPL…LSAG.

This sequence belongs to the complex I subunit 1 family. In terms of assembly, core subunit of respiratory chain NADH dehydrogenase (Complex I) which is composed of 45 different subunits.

It is found in the mitochondrion inner membrane. The catalysed reaction is a ubiquinone + NADH + 5 H(+)(in) = a ubiquinol + NAD(+) + 4 H(+)(out). Functionally, core subunit of the mitochondrial membrane respiratory chain NADH dehydrogenase (Complex I) which catalyzes electron transfer from NADH through the respiratory chain, using ubiquinone as an electron acceptor. Essential for the catalytic activity and assembly of complex I. This chain is NADH-ubiquinone oxidoreductase chain 1 (MT-ND1), found in Zaedyus pichiy (Pichi).